The primary structure comprises 156 residues: Transcription factor MafK (156 aa).

Positions 1–21 (MTTNPKPNKALKVKEESGENA) are disordered. A basic motif region spans residues 51-76 (RLKQRRRTLKNRGYAASCRIKRVTQK). The bZIP domain maps to 51–114 (RLKQRRRTLK…DALRSKYEAL (64 aa)). Residues 79–93 (LERQRVELQQEVEKL) form a leucine-zipper region.

The protein belongs to the bZIP family. Maf subfamily. In terms of assembly, homodimer or heterodimer.

The protein resides in the nucleus. Since they lack a putative transactivation domain, the small Mafs behave as transcriptional repressors when they dimerize among themselves. However, they act as transcriptional activators by dimerizing with other (usually larger) basic-zipper proteins and recruiting them to specific DNA-binding sites. Small Maf proteins heterodimerize with Fos and may act as competitive repressors of the NF-E2 transcription factor. In Gallus gallus (Chicken), this protein is Transcription factor MafK (MAFK).